The primary structure comprises 204 residues: Quinol oxidase subunit 3 (204 aa).

6 consecutive transmembrane segments (helical) span residues 27 to 47 (FWIFLGAEIVLFSTLFATFFV), 66 to 86 (LVMIMTFLLLISSFTCGIAVH), 95 to 115 (GVVIWTIITLLLGAGFVGCEI), 118 to 138 (FVHYVHEGAALSTSAFWSGFF), 140 to 160 (LLGTHGTHVTIGIFWITGILI), and 184 to 204 (FLDVVWIFIFTGVYLMGLGGL).

This sequence belongs to the cytochrome c oxidase subunit 3 family.

The protein localises to the cell membrane. It catalyses the reaction 2 a quinol + O2 = 2 a quinone + 2 H2O. Functionally, catalyzes quinol oxidation with the concomitant reduction of oxygen to water. Major component for energy conversion during vegetative growth. The polypeptide is Quinol oxidase subunit 3 (qoxC) (Bacillus subtilis (strain 168)).